We begin with the raw amino-acid sequence, 483 residues long: Zinc metalloproteinase/disintegrin (483 aa).

Residues 1-20 (MIQVLLVTICLAVFPYQGSS) form the signal peptide. Residues 21 to 190 (IILESGNVND…KASQLYLTPE (170 aa)) constitute a propeptide that is removed on maturation. The Peptidase M12B domain occupies 197 to 395 (RYIELAIVVD…RNPQCILNAP (199 aa)). Glutamate 200 contributes to the Ca(2+) binding site. N-linked (GlcNAc...) asparagine glycosylation occurs at asparagine 263. Aspartate 284 contributes to the Ca(2+) binding site. An N-linked (GlcNAc...) asparagine glycan is attached at asparagine 293. Intrachain disulfides connect cysteine 308–cysteine 390, cysteine 352–cysteine 374, and cysteine 354–cysteine 357. Histidine 333 provides a ligand contact to Zn(2+). The active site involves glutamate 334. 2 residues coordinate Zn(2+): histidine 337 and histidine 343. Ca(2+) contacts are provided by cysteine 390 and asparagine 393. Residues 396–413 (LRTDTVSTPVSGNEFLEA) constitute a propeptide that is removed on maturation. The Disintegrin domain maps to 403–483 (TPVSGNEFLE…SNDCPRWNDL (81 aa)). 6 disulfide bridges follow: cysteine 417–cysteine 432, cysteine 419–cysteine 427, cysteine 426–cysteine 449, cysteine 440–cysteine 446, cysteine 445–cysteine 470, and cysteine 458–cysteine 477. Residues 462 to 464 (RGD) carry the Cell attachment site motif.

This sequence belongs to the venom metalloproteinase (M12B) family. P-II subfamily. P-IIa sub-subfamily. Monomeric (disintegrin). The cofactor is Zn(2+). In terms of tissue distribution, expressed by the venom gland.

It localises to the secreted. Impairs hemostasis in the envenomed animal. In terms of biological role, inhibits platelet aggregation induced by ADP, thrombin, platelet-activating factor and collagen. Acts by inhibiting fibrinogen interaction with platelet receptors GPIIb/GPIIIa (ITGA2B/ITGB3). The sequence is that of Zinc metalloproteinase/disintegrin from Protobothrops flavoviridis (Habu).